The primary structure comprises 137 residues: Large ribosomal subunit protein uL16c (137 aa).

The protein belongs to the universal ribosomal protein uL16 family. As to quaternary structure, part of the 50S ribosomal subunit.

It is found in the plastid. The chain is Large ribosomal subunit protein uL16c from Cuscuta exaltata (Tall dodder).